The sequence spans 465 residues: SHC-transforming protein 1 (465 aa).

The PID domain occupies methionine 44–glutamate 227. The segment at glutamate 228–proline 369 is CH1. A disordered region spans residues valine 281–phenylalanine 315. An SH2 domain is found at tryptophan 370 to valine 461.

In terms of assembly, interacts with grb2. Highly expressed in oocytes and embryo. Also expressed in liver. Detected in ovary, testis and heart and to a lesser extent in liver (at protein level).

The protein localises to the cytoplasm. In terms of biological role, implicated in ras-dependent oocyte maturation induced by insulin/IGF1. The sequence is that of SHC-transforming protein 1 (shc1) from Xenopus laevis (African clawed frog).